A 131-amino-acid polypeptide reads, in one-letter code: Ribonuclease VapC30 (131 aa).

In terms of domain architecture, PINc spans 1–129 (MVIDTSALVA…FQHTDIATVA (129 aa)). Residues D4 and D99 each coordinate Mg(2+).

It belongs to the PINc/VapC protein family. The cofactor is Mg(2+).

In terms of biological role, toxic component of a type II toxin-antitoxin (TA) system. An RNase. Its toxic effect is neutralized by coexpression with cognate antitoxin VapB30. The chain is Ribonuclease VapC30 from Mycobacterium tuberculosis (strain CDC 1551 / Oshkosh).